Here is a 131-residue protein sequence, read N- to C-terminus: Large ribosomal subunit protein bL17 (131 aa).

Belongs to the bacterial ribosomal protein bL17 family. Part of the 50S ribosomal subunit. Contacts protein L32.

The protein is Large ribosomal subunit protein bL17 of Herminiimonas arsenicoxydans.